The following is a 407-amino-acid chain: MEVYLVGGAVRDKLLGIPVYDQDWVVVGATAEQMLNAGYSPVGKDFPVFLHPKTKQEYALARTERKTGQGYKGFECFFSPDVTLEEDLLRRDLTINAIAMDSQGVLYDPYGGQQDLQDRILRHVSEAFVEDPLRVLRVARFAAKLAPLGFRVADETMQLMQSIVASGELSALTAERVWQEWHKSLLTPAPQQFLAVLRQCGALAVVLPEIDALFGVPQPEKWHPEIDTGIHTLLVAEQAAKLSSSAVVRFAAQVHDLGKGVTPPSEWPSHKMHCHTGLKLIKQLCERVRVPNEFRDLALMVCEQHSNIHRAAELKPQTMVKIFNKLDVWRKAERLNDILLCCQADHAGRQGLQDHPYPQAERIQLAYQAALSVEVQSVIQDGFKGPAIRDEQERRRIEAVKAALLNA.

Positions 8 and 11 each coordinate ATP. CTP-binding residues include Gly8 and Arg11. Mg(2+)-binding residues include Asp21 and Asp23. 3 residues coordinate ATP: Arg91, Arg137, and Arg140. CTP-binding residues include Arg91, Arg137, and Arg140. Positions 228–329 constitute an HD domain; sequence TGIHTLLVAE…VKIFNKLDVW (102 aa).

It belongs to the tRNA nucleotidyltransferase/poly(A) polymerase family. Bacterial CCA-adding enzyme type 1 subfamily. In terms of assembly, monomer. Can also form homodimers and oligomers. It depends on Mg(2+) as a cofactor. Ni(2+) is required as a cofactor.

The enzyme catalyses a tRNA precursor + 2 CTP + ATP = a tRNA with a 3' CCA end + 3 diphosphate. The catalysed reaction is a tRNA with a 3' CCA end + 2 CTP + ATP = a tRNA with a 3' CCACCA end + 3 diphosphate. Functionally, catalyzes the addition and repair of the essential 3'-terminal CCA sequence in tRNAs without using a nucleic acid template. Adds these three nucleotides in the order of C, C, and A to the tRNA nucleotide-73, using CTP and ATP as substrates and producing inorganic pyrophosphate. tRNA 3'-terminal CCA addition is required both for tRNA processing and repair. Also involved in tRNA surveillance by mediating tandem CCA addition to generate a CCACCA at the 3' terminus of unstable tRNAs. While stable tRNAs receive only 3'-terminal CCA, unstable tRNAs are marked with CCACCA and rapidly degraded. This is Multifunctional CCA protein from Vibrio vulnificus (strain YJ016).